Here is a 353-residue protein sequence, read N- to C-terminus: D-glycerol 3-phosphate phosphatase (353 aa).

Residue aspartate 14 is the Nucleophile of the active site. Mg(2+) contacts are provided by aspartate 14, aspartate 16, and aspartate 209. The Proton donor role is filled by aspartate 16.

The protein belongs to the HAD-like hydrolase superfamily. In terms of assembly, homodimer. The cofactor is Mg(2+). Requires Co(2+) as cofactor. Mn(2+) serves as cofactor.

It catalyses the reaction sn-glycerol 1-phosphate + H2O = glycerol + phosphate. Its pathway is glycerolipid metabolism. Dephosphorylates D-glycerol 3-phosphate (sn-glycerol 1-phosphate). Is the final enzyme involved in the recycling/catabolism of glycerophospholipid polar heads. To a lesser extent, is also able to act on glycerol 2-phosphate and D-ribulose 5-phosphate, but cannot use D-glyceraldehyde 3-phosphate, dihydroxyacetone-phosphate, UMP or GMP as substrates. This is D-glycerol 3-phosphate phosphatase from Mycobacterium tuberculosis (strain ATCC 25618 / H37Rv).